A 639-amino-acid polypeptide reads, in one-letter code: Carbon monoxide dehydrogenase (639 aa).

Residues Cys-41, Cys-49, Cys-50, Cys-53, Cys-58, and Cys-72 each contribute to the [4Fe-4S] cluster site. 6 residues coordinate [Ni-4Fe-4S] cluster: His-265, Cys-300, Cys-338, Cys-451, Cys-481, and Cys-531.

The protein belongs to the Ni-containing carbon monoxide dehydrogenase family. Homodimer. It depends on [4Fe-4S] cluster as a cofactor. [Ni-4Fe-4S] cluster serves as cofactor.

The protein localises to the cytoplasm. The protein resides in the cell inner membrane. It catalyses the reaction CO + 2 oxidized [2Fe-2S]-[ferredoxin] + H2O = 2 reduced [2Fe-2S]-[ferredoxin] + CO2 + 2 H(+). In terms of biological role, allows growth in a CO-dependent manner in the dark. CODH oxidizes carbon monoxide coupled, via CooF, to the reduction of a hydrogen cation by a hydrogenase (possibly CooH). The polypeptide is Carbon monoxide dehydrogenase (cooS) (Rhodospirillum rubrum).